Reading from the N-terminus, the 338-residue chain is Malate dehydrogenase, mitochondrial (338 aa).

The transit peptide at 1–24 (MLSALARPAGAALRRSFSTSAQNN) directs the protein to the mitochondrion. Residues 31 to 37 (GASGGIG) and D57 each bind NAD(+). Residue S33 is glycosylated (O-linked (GlcNAc) serine). 2 positions are modified to N6-acetyllysine; alternate: K78 and K91. N6-succinyllysine; alternate occurs at positions 78 and 91. Substrate contacts are provided by R104 and R110. NAD(+) is bound by residues N117 and 140 to 142 (IAN). N142 contacts substrate. Residue K165 is modified to N6-acetyllysine. Residue R176 participates in substrate binding. Position 185 is an N6-acetyllysine; alternate (K185). The residue at position 185 (K185) is an N6-succinyllysine; alternate. The active-site Proton acceptor is the H200. K203 is modified (N6-succinyllysine). 2 positions are modified to N6-acetyllysine; alternate: K215 and K239. N6-succinyllysine; alternate occurs at positions 215 and 239. Residue K239 is modified to N6-malonyllysine; alternate. The residue at position 246 (S246) is a Phosphoserine. An NAD(+)-binding site is contributed by M251. The residue at position 269 (K269) is an N6-succinyllysine. N6-acetyllysine; alternate occurs at positions 296, 301, and 307. N6-succinyllysine; alternate occurs at positions 296, 301, and 307. K307 is subject to N6-malonyllysine; alternate. T309 is modified (phosphothreonine). Residues K314 and K324 each carry the N6-acetyllysine; alternate modification. N6-succinyllysine; alternate occurs at positions 314 and 324. S326 is modified (phosphoserine). Residues K328, K329, and K335 each carry the N6-acetyllysine; alternate modification. N6-succinyllysine; alternate is present on K328. At K329 the chain carries N6-malonyllysine; alternate. An N6-succinyllysine; alternate modification is found at K335.

It belongs to the LDH/MDH superfamily. MDH type 1 family. As to quaternary structure, homodimer. Post-translationally, acetylation is enhanced after treatment either with trichostin A (TCA) or with nicotinamide (NAM) with the appearance of tri- and tetraacetylations. Glucose also increases acetylation. Acetylation of Lys-239 and Lys-314 is observed in liver mitochondria from fasted mice but not from fed mice.

It localises to the mitochondrion matrix. The enzyme catalyses (S)-malate + NAD(+) = oxaloacetate + NADH + H(+). Enzyme activity is enhanced by acetylation. The protein is Malate dehydrogenase, mitochondrial (Mdh2) of Mus musculus (Mouse).